We begin with the raw amino-acid sequence, 335 residues long: Legumin type B (335 aa).

2 disordered regions span residues 47–87 (PETQ…GNSV) and 102–155 (TEED…GRNG). Positions 105–118 (DTAKRLRSPRDKRN) are enriched in basic and acidic residues. A compositionally biased stretch (acidic residues) spans 135-144 (QQEEEEEEEE). The Cupin type-1 domain maps to 167-314 (ENIAQPARAD…AFGLRQRQVT (148 aa)).

It belongs to the 11S seed storage protein (globulins) family. In terms of assembly, hexamer; each subunit is composed of an acidic and a basic chain derived from a single precursor and linked by a disulfide bond.

In terms of biological role, this protein found in the seeds of many leguminous and non-leguminous plants is the source of sulfur-containing amino acids in seed meals. The sequence is that of Legumin type B (LEB2) from Vicia faba (Broad bean).